We begin with the raw amino-acid sequence, 3108 residues long: Probable polyketide synthase 39 (3108 aa).

In terms of domain architecture, Ketosynthase family 3 (KS3) spans 9-440 (DDDVAVIGIG…GSNVCLILSE (432 aa)). Active-site for beta-ketoacyl synthase activity residues include C181, H320, and H363. The interval 643–676 (GVSADIIIGHSLGEISSAYCSGMIDFQTLCYLTY) is acyl/malonyl transferase. The active-site For acyl/malonyl transferase activity is the S653. The interval 939–1068 (HEKIKSEGPS…GNFSLFKHNI (130 aa)) is N-terminal hotdog fold. The PKS/mFAS DH domain maps to 939–1265 (HEKIKSEGPS…CTIAASNPDS (327 aa)). Residue H980 is the Proton acceptor; for dehydratase activity of the active site. Residues 1085–1265 (NFTSISKQDL…CTIAASNPDS (181 aa)) are C-terminal hotdog fold. The Proton donor; for dehydratase activity role is filled by D1157. Residues 1375-1435 (NNNNNNNNNN…NNNNNNNNNN (61 aa)) are disordered. One can recognise a Carrier domain in the interval 2566 to 2643 (GNNEIIHSTI…QSIEIIKSAL (78 aa)). Position 2603 is an O-(pantetheine 4'-phosphoryl)serine (S2603). The helical transmembrane segment at 2702 to 2722 (IFLTGSTGFLGAYLLMELIKM) threads the bilayer.

It depends on pantetheine 4'-phosphate as a cofactor.

Its subcellular location is the membrane. Its function is as follows. Probable polyketide synthase. This is Probable polyketide synthase 39 (pks39) from Dictyostelium discoideum (Social amoeba).